Here is a 212-residue protein sequence, read N- to C-terminus: MNLLIMGLPGAGKGTQAAKIVDHFNVAHISTGDMFRAAIANQTEMGVLAKSYIDKGELVPDEVTNGIVKERLSQNDIKETGFLLDGYPRTIEQAHALDQTLTELDLALDGVINIEVDPNSLLERLSGRIIHRETGETFHKVFNPPADYKEEDYYQREDDKPETVKRRLDVNIAQGQPIIDHYRRKGLVHDIQGNQDINDVFSAIEKVLTNLK.

10–15 (GAGKGT) contributes to the ATP binding site. Positions 30–59 (STGDMFRAAIANQTEMGVLAKSYIDKGELV) are NMP. Residues T31, R36, 57-59 (ELV), 86-89 (GYPR), and Q93 each bind AMP. The segment at 127-159 (GRIIHRETGETFHKVFNPPADYKEEDYYQREDD) is LID. Residues R128 and 137–138 (TF) each bind ATP. Residues R156 and R167 each coordinate AMP. An ATP-binding site is contributed by Q195.

Belongs to the adenylate kinase family. Monomer.

It is found in the cytoplasm. It carries out the reaction AMP + ATP = 2 ADP. Its pathway is purine metabolism; AMP biosynthesis via salvage pathway; AMP from ADP: step 1/1. Its function is as follows. Catalyzes the reversible transfer of the terminal phosphate group between ATP and AMP. Plays an important role in cellular energy homeostasis and in adenine nucleotide metabolism. The protein is Adenylate kinase of Streptococcus sanguinis (strain SK36).